We begin with the raw amino-acid sequence, 334 residues long: Methionine adenosyltransferase 2 subunit beta (334 aa).

NADP(+)-binding positions include 37-40 (TGLL), 60-62 (FRR), 71-72 (NL), cysteine 93, arginine 97, tyrosine 159, and leucine 185. Residue threonine 309 is modified to Phosphothreonine. A required for interaction with MAT2A region spans residues 319–334 (LWPFLIDKRWRQTVFH).

It belongs to the dTDP-4-dehydrorhamnose reductase family. MAT2B subfamily. As to quaternary structure, heterotrimer; composed of a catalytic MAT2A homodimer that binds one regulatory MAT2B chain. Heterohexamer; composed of a central, catalytic MAT2A homotetramer flanked on either side by a regulatory MAT2B chain. NADP binding increases the affinity for MAT2A.

It participates in amino-acid biosynthesis; S-adenosyl-L-methionine biosynthesis; S-adenosyl-L-methionine from L-methionine: step 1/1. Its function is as follows. Regulatory subunit of S-adenosylmethionine synthetase 2, an enzyme that catalyzes the formation of S-adenosylmethionine from methionine and ATP. Regulates MAT2A catalytic activity by changing its kinetic properties, increasing its affinity for L-methionine. Can bind NADP (in vitro). This chain is Methionine adenosyltransferase 2 subunit beta (Mat2b), found in Rattus norvegicus (Rat).